A 306-amino-acid polypeptide reads, in one-letter code: MGGASGTLPKVAMLMGGPSAEREVSLSTGRECARALRGQGYEVVEVDAGPDLVAQLNDIKPDVAFNALHGRWGEDGCVQGLLEWLRIPYTHSGVLASALAMDKERSKAAYRTAGLPVVDSVIAAKADVMARHVIAPPYVVKPNNEGSSVGIYIVHEATNSPPQLSEEMPAQVMVEAYAPGREMTVTVMGDRALCVTDILTDGWYDYEAKYATGGSRHVLPAEIPDEIADLCHDYALRAHQVLGCRGISRTDFRWDEARGADGLVLLETNTQPGMTPTSLSPEQAEHVGLTFGQLCAWLVEDASCER.

The ATP-grasp domain maps to 107–300; that stretch reads KAAYRTAGLP…FGQLCAWLVE (194 aa). 134–184 serves as a coordination point for ATP; the sequence is IAPPYVVKPNNEGSSVGIYIVHEATNSPPQLSEEMPAQVMVEAYAPGREMT. Mg(2+) contacts are provided by aspartate 251, glutamate 267, and asparagine 269.

It belongs to the D-alanine--D-alanine ligase family. The cofactor is Mg(2+). Mn(2+) serves as cofactor.

The protein localises to the cytoplasm. The enzyme catalyses 2 D-alanine + ATP = D-alanyl-D-alanine + ADP + phosphate + H(+). It participates in cell wall biogenesis; peptidoglycan biosynthesis. In terms of biological role, cell wall formation. The sequence is that of D-alanine--D-alanine ligase from Ruegeria sp. (strain TM1040) (Silicibacter sp.).